Reading from the N-terminus, the 496-residue chain is L-arabinose isomerase (496 aa).

Mn(2+) is bound by residues glutamate 306, glutamate 331, histidine 348, and histidine 447.

It belongs to the arabinose isomerase family. Requires Mn(2+) as cofactor.

It catalyses the reaction beta-L-arabinopyranose = L-ribulose. It participates in carbohydrate degradation; L-arabinose degradation via L-ribulose; D-xylulose 5-phosphate from L-arabinose (bacterial route): step 1/3. Catalyzes the conversion of L-arabinose to L-ribulose. The chain is L-arabinose isomerase from Geobacillus kaustophilus (strain HTA426).